We begin with the raw amino-acid sequence, 591 residues long: Aspartate--tRNA ligase (591 aa).

Glu173 serves as a coordination point for L-aspartate. The aspartate stretch occupies residues 197-200 (QLFK). Arg219 contacts L-aspartate. ATP is bound by residues 219–221 (RDE) and Gln228. His448 is an L-aspartate binding site. ATP is bound at residue Glu482. L-aspartate is bound at residue Arg489. 534–537 (GLDR) contributes to the ATP binding site.

This sequence belongs to the class-II aminoacyl-tRNA synthetase family. Type 1 subfamily. In terms of assembly, homodimer.

Its subcellular location is the cytoplasm. It catalyses the reaction tRNA(Asp) + L-aspartate + ATP = L-aspartyl-tRNA(Asp) + AMP + diphosphate. Its function is as follows. Catalyzes the attachment of L-aspartate to tRNA(Asp) in a two-step reaction: L-aspartate is first activated by ATP to form Asp-AMP and then transferred to the acceptor end of tRNA(Asp). The sequence is that of Aspartate--tRNA ligase from Shewanella sp. (strain ANA-3).